The sequence spans 86 residues: Progonadoliberin IIB (86 aa).

An N-terminal signal peptide occupies residues 1 to 24 (MVHICRLFVVMGMLMFLSVQFASS). Q25 bears the Pyrrolidone carboxylic acid mark. The residue at position 34 (G34) is a Glycine amide.

Belongs to the GnRH family. In terms of tissue distribution, olfactory bulbs, hypothalamus and telencephalon, midbrain and posterior brain areas.

The protein resides in the secreted. Stimulates the secretion of gonadotropins. The polypeptide is Progonadoliberin IIB (gnrh2b) (Carassius auratus (Goldfish)).